The sequence spans 93 residues: Small ribosomal subunit protein uS15 (93 aa).

The protein belongs to the universal ribosomal protein uS15 family. In terms of assembly, part of the 30S ribosomal subunit. Forms a bridge to the 50S subunit in the 70S ribosome, contacting the 23S rRNA.

Its function is as follows. One of the primary rRNA binding proteins, it binds directly to 16S rRNA where it helps nucleate assembly of the platform of the 30S subunit by binding and bridging several RNA helices of the 16S rRNA. In terms of biological role, forms an intersubunit bridge (bridge B4) with the 23S rRNA of the 50S subunit in the ribosome. The polypeptide is Small ribosomal subunit protein uS15 (Ehrlichia chaffeensis (strain ATCC CRL-10679 / Arkansas)).